An 85-amino-acid chain; its full sequence is UPF0386 protein TM1040_0419 (85 aa).

The disordered stretch occupies residues S62–R85.

Belongs to the UPF0386 family.

The chain is UPF0386 protein TM1040_0419 from Ruegeria sp. (strain TM1040) (Silicibacter sp.).